A 402-amino-acid polypeptide reads, in one-letter code: Diaminopimelate decarboxylase (402 aa).

Residue Lys61 is modified to N6-(pyridoxal phosphate)lysine. Pyridoxal 5'-phosphate contacts are provided by residues Gly233 and Glu269–Arg272. Arg272, Arg304, Tyr308, Glu334, and Tyr360 together coordinate substrate. Tyr360 is a binding site for pyridoxal 5'-phosphate.

The protein belongs to the Orn/Lys/Arg decarboxylase class-II family. LysA subfamily. Homodimer. Requires pyridoxal 5'-phosphate as cofactor.

It carries out the reaction meso-2,6-diaminopimelate + H(+) = L-lysine + CO2. Its pathway is amino-acid biosynthesis; L-lysine biosynthesis via DAP pathway; L-lysine from DL-2,6-diaminopimelate: step 1/1. Its function is as follows. Specifically catalyzes the decarboxylation of meso-diaminopimelate (meso-DAP) to L-lysine. This is Diaminopimelate decarboxylase from Thermoplasma acidophilum (strain ATCC 25905 / DSM 1728 / JCM 9062 / NBRC 15155 / AMRC-C165).